An 84-amino-acid chain; its full sequence is Cell division topological specificity factor (84 aa).

It belongs to the MinE family.

Prevents the cell division inhibition by proteins MinC and MinD at internal division sites while permitting inhibition at polar sites. This ensures cell division at the proper site by restricting the formation of a division septum at the midpoint of the long axis of the cell. The chain is Cell division topological specificity factor from Pseudomonas fluorescens (strain Pf0-1).